A 215-amino-acid chain; its full sequence is Large ribosomal subunit protein uL1 (215 aa).

Belongs to the universal ribosomal protein uL1 family. As to quaternary structure, part of the 50S ribosomal subunit.

In terms of biological role, binds directly to 23S rRNA. Probably involved in E site tRNA release. Its function is as follows. Protein L1 is also a translational repressor protein, it controls the translation of its operon by binding to its mRNA. The protein is Large ribosomal subunit protein uL1 of Methanospirillum hungatei JF-1 (strain ATCC 27890 / DSM 864 / NBRC 100397 / JF-1).